The sequence spans 1404 residues: G8 domain-containing protein DDB_G0286897 (1404 aa).

The signal sequence occupies residues 1 to 20 (MNYFKYFIFVVFLFFTIVKC). 2 helical membrane-spanning segments follow: residues 97–117 (LVGF…GLFA) and 128–148 (IIIL…IQSI). N-linked (GlcNAc...) asparagine glycans are attached at residues Asn-352, Asn-365, Asn-413, Asn-481, Asn-639, Asn-838, Asn-979, Asn-1003, Asn-1017, Asn-1253, and Asn-1334. Residues 553 to 679 (STWASGFVPL…YHNTWTKLST (127 aa)) form the G8 domain.

The protein belongs to the comF family.

The protein localises to the membrane. This Dictyostelium discoideum (Social amoeba) protein is G8 domain-containing protein DDB_G0286897.